Consider the following 413-residue polypeptide: Tubby-like F-box protein 6 (413 aa).

The region spanning 67–122 (SIWVDLPPELLLDIIQRIESEQSLWPGRRDVVACASVCKSWREMTKEVVKVPELSG) is the F-box domain.

It belongs to the TUB family. Ubiquitous, with higher levels in flowers.

In Arabidopsis thaliana (Mouse-ear cress), this protein is Tubby-like F-box protein 6.